We begin with the raw amino-acid sequence, 253 residues long: Sugar fermentation stimulation protein homolog (253 aa).

Belongs to the SfsA family.

The protein is Sugar fermentation stimulation protein homolog of Chromohalobacter salexigens (strain ATCC BAA-138 / DSM 3043 / CIP 106854 / NCIMB 13768 / 1H11).